Here is a 691-residue protein sequence, read N- to C-terminus: Elongation factor G (691 aa).

The 275-residue stretch at 8 to 282 folds into the tr-type G domain; sequence ERVRNIGIAA…AVVDYLPAPV (275 aa). Residues 17–24, 81–85, and 135–138 each bind GTP; these read AHIDAGKT, DTPGH, and NKMD.

The protein belongs to the TRAFAC class translation factor GTPase superfamily. Classic translation factor GTPase family. EF-G/EF-2 subfamily.

It is found in the cytoplasm. In terms of biological role, catalyzes the GTP-dependent ribosomal translocation step during translation elongation. During this step, the ribosome changes from the pre-translocational (PRE) to the post-translocational (POST) state as the newly formed A-site-bound peptidyl-tRNA and P-site-bound deacylated tRNA move to the P and E sites, respectively. Catalyzes the coordinated movement of the two tRNA molecules, the mRNA and conformational changes in the ribosome. In Prochlorococcus marinus (strain MIT 9313), this protein is Elongation factor G.